The sequence spans 100 residues: Carboxysome shell vertex protein CcmL (100 aa).

The region spanning methionine 1–aspartate 83 is the BMV domain.

The protein belongs to the CcmL/EutN family. CcmL subfamily. Homopentamer. Interacts with full-length CcmM.

It localises to the carboxysome. Probably forms vertices in the carboxysome, a polyhedral inclusion where RuBisCO (ribulose bisphosphate carboxylase, rbcL-rbcS) is sequestered. Has been modeled to induce curvature upon insertion into an otherwise flat hexagonal molecular layer of CcmK subunits. The protein is Carboxysome shell vertex protein CcmL of Gloeobacter violaceus (strain ATCC 29082 / PCC 7421).